The following is a 206-amino-acid chain: 21.9 kDa heat shock protein (206 aa).

The N-terminal stretch at 1–29 (MAAVAEREVLGMVAAVAAMVVMMAPPAAA) is a signal peptide. The sHSP domain maps to 65–187 (EPAAVALARC…GREPRVVAID (123 aa)). Positions 94-96 (RGD) match the Cell attachment site motif.

Belongs to the small heat shock protein (HSP20) family. In terms of assembly, may form oligomeric structures.

The protein localises to the endoplasmic reticulum. In Oryza sativa subsp. japonica (Rice), this protein is 21.9 kDa heat shock protein (HSP21.9).